Here is a 355-residue protein sequence, read N- to C-terminus: MKKHNFSAGPSILPREVIEETAKAILDFNGSGLSVLEVSHRGKDFQAVMDEAVALFKEILNIPEGYSVLFLGGGASMQFCMVPYNFLEKKAAYLNTGVWAKKAMKEAKGFGEVVEVASSADANYTFIPKDFTIPADADYFHVTTNNTIYGTELKGDLDSPVPMVADMSSDIFSRPVDVSKYICIYGGAQKNLAPSGVTFVIVKDDAVGKVSRYIPSMLNYKTHIDGGSMFNTPPVLPIYSAMQTLRWIKAQGGVKEMDRRATEKADMLYAEIDRNKMFVGTAAKEDRSRMNICFVMAPEYKDLEADFLKFATDKGMSGIKGHRSVGGFRASCYNAMPKESVQALIDCMQEFEKLH.

Arg-41 serves as a coordination point for L-glutamate. Residues 75–76 (AS), Trp-99, Thr-147, Asp-166, and Gln-189 contribute to the pyridoxal 5'-phosphate site. Lys-190 bears the N6-(pyridoxal phosphate)lysine mark. Residue 231–232 (NT) coordinates pyridoxal 5'-phosphate.

It belongs to the class-V pyridoxal-phosphate-dependent aminotransferase family. SerC subfamily. In terms of assembly, homodimer. Requires pyridoxal 5'-phosphate as cofactor.

The protein localises to the cytoplasm. The enzyme catalyses O-phospho-L-serine + 2-oxoglutarate = 3-phosphooxypyruvate + L-glutamate. It carries out the reaction 4-(phosphooxy)-L-threonine + 2-oxoglutarate = (R)-3-hydroxy-2-oxo-4-phosphooxybutanoate + L-glutamate. It functions in the pathway amino-acid biosynthesis; L-serine biosynthesis; L-serine from 3-phospho-D-glycerate: step 2/3. The protein operates within cofactor biosynthesis; pyridoxine 5'-phosphate biosynthesis; pyridoxine 5'-phosphate from D-erythrose 4-phosphate: step 3/5. Catalyzes the reversible conversion of 3-phosphohydroxypyruvate to phosphoserine and of 3-hydroxy-2-oxo-4-phosphonooxybutanoate to phosphohydroxythreonine. This Bacteroides fragilis (strain ATCC 25285 / DSM 2151 / CCUG 4856 / JCM 11019 / LMG 10263 / NCTC 9343 / Onslow / VPI 2553 / EN-2) protein is Phosphoserine aminotransferase.